A 302-amino-acid chain; its full sequence is 1,2-dihydroxynaphthalene dioxygenase (302 aa).

VOC domains lie at 9-124 (ELGY…IFWG) and 149-270 (GLGH…PGWR). His152 provides a ligand contact to Fe cation. Residues His152, 199–200 (DH), His215, and Tyr256 each bind substrate. Residue His215 participates in Fe cation binding. Position 266 (Glu266) interacts with Fe cation.

This sequence belongs to the extradiol ring-cleavage dioxygenase family. Fe(2+) serves as cofactor.

It catalyses the reaction naphthalene-1,2-diol + O2 = 2-hydroxychromene-2-carboxylate + H(+). Its pathway is aromatic compound metabolism; naphthalene degradation. Inhibited by bathophenanthroline sulfonate, o-phenanthroline, 8-hydroxyquinoline, 2,2'-dipyridyl and p-chlormercuribenzoate. Also inhibited by Hg(2+), Cu(2+), Co(2+) and Fe(3+) ions. Functionally, involved in the naphthalene catabolic pathway. Catalyzes the meta-cleavage of 1,2-dihydroxynaphthalene (1,2-DHN) to yield 2-hydroxychromene-2-carboxylic acid. Can also cleave 3-methylcatechol and 4-methylcatechol. This is 1,2-dihydroxynaphthalene dioxygenase (nahC) from Pseudomonas putida (Arthrobacter siderocapsulatus).